Reading from the N-terminus, the 442-residue chain is D-aminoacyl-tRNA deacylase (442 aa).

It belongs to the DtdA deacylase family. As to quaternary structure, monomer. Requires Zn(2+) as cofactor.

The catalysed reaction is a D-aminoacyl-tRNA + H2O = a tRNA + a D-alpha-amino acid + H(+). It carries out the reaction glycyl-tRNA(Ala) + H2O = tRNA(Ala) + glycine + H(+). Its function is as follows. D-aminoacyl-tRNA deacylase with broad substrate specificity. By recycling D-aminoacyl-tRNA to D-amino acids and free tRNA molecules, this enzyme counteracts the toxicity associated with the formation of D-aminoacyl-tRNA entities in vivo. The sequence is that of D-aminoacyl-tRNA deacylase from Methanospirillum hungatei JF-1 (strain ATCC 27890 / DSM 864 / NBRC 100397 / JF-1).